The primary structure comprises 223 residues: Mitochondrial cardiolipin hydrolase (223 aa).

Topologically, residues 1–6 are mitochondrial intermembrane; it reads MGCASS. Residues 7-24 form a helical membrane-spanning segment; sequence KEEVALTPLSDVNAAKEV. At 25 to 223 the chain is on the cytoplasmic side; sequence ADLKAQVDQL…QFDKLWDMFK (199 aa). Positions 164-191 constitute a PLD phosphodiesterase domain; it reads TAAHMHHKFAIIDGRLLLNGSFNWTRQA. Residues His-169, Lys-171, and Asp-176 contribute to the active site.

The protein belongs to the phospholipase D family. MitoPLD/Zucchini subfamily. As to quaternary structure, homodimer.

The protein localises to the mitochondrion outer membrane. Plays a critical role in PIWI-interacting RNA (piRNA) biogenesis. piRNAs provide essential protection against the activity of mobile genetic elements. piRNA-mediated transposon silencing is thus critical for maintaining genome stability. Backbone-non-specific, single strand-specific nuclease, cleaving either RNA or DNA substrates with similar affinity. Produces 5' phosphate and 3' hydroxyl termini, suggesting it could directly participate in the processing of primary piRNA transcripts. Has been proposed to act as a cardiolipin hydrolase to generate phosphatidic acid at mitochondrial surface. Although it cannot be excluded that it can act as a phospholipase in some circumstances, this activity could not be confirmed. The polypeptide is Mitochondrial cardiolipin hydrolase (Chlamydomonas reinhardtii (Chlamydomonas smithii)).